The chain runs to 449 residues: Probable phosphoglucosamine mutase (449 aa).

S96 (phosphoserine intermediate) is an active-site residue. Mg(2+)-binding residues include S96, D233, D235, and D237. S96 carries the phosphoserine modification.

The protein belongs to the phosphohexose mutase family. It depends on Mg(2+) as a cofactor. In terms of processing, activated by phosphorylation.

The enzyme catalyses alpha-D-glucosamine 1-phosphate = D-glucosamine 6-phosphate. In terms of biological role, catalyzes the conversion of glucosamine-6-phosphate to glucosamine-1-phosphate. The polypeptide is Probable phosphoglucosamine mutase (Thermococcus gammatolerans (strain DSM 15229 / JCM 11827 / EJ3)).